Consider the following 87-residue polypeptide: Mu-theraphotoxin-Hs1a (87 aa).

An N-terminal signal peptide occupies residues 1–24 (MVNMKASMFLTFAGLVLLFVVCYA). A propeptide spanning residues 25–52 (SESEEKEFPKEMLSSIFAVDNDFKQEER) is cleaved from the precursor. Cystine bridges form between Cys54–Cys67, Cys61–Cys72, and Cys66–Cys79.

This sequence belongs to the neurotoxin 10 (Hwtx-1) family. 51 (Hntx-8) subfamily. Hntx-8 sub-subfamily. Expressed by the venom gland.

Its subcellular location is the secreted. Probable sodium channel pore blocker that dose-dependently inhibits voltage-gated sodium channels (VGSC) on DUM neurons in a way similar to tetrodotoxin. Has no effect on the kinetics of activation and inactivation. Seems not to interact with VGSC in an inactivated state. In vivo, reversibly paralyzes cockroaches, and can enhance the muscular contraction elicited by stimulating its nerve. This chain is Mu-theraphotoxin-Hs1a, found in Cyriopagopus schmidti (Chinese bird spider).